We begin with the raw amino-acid sequence, 101 residues long: Small ribosomal subunit protein uS14 (101 aa).

Residues leucine 51–proline 70 form a disordered region.

It belongs to the universal ribosomal protein uS14 family. As to quaternary structure, part of the 30S ribosomal subunit. Contacts proteins S3 and S10.

Functionally, binds 16S rRNA, required for the assembly of 30S particles and may also be responsible for determining the conformation of the 16S rRNA at the A site. The sequence is that of Small ribosomal subunit protein uS14 from Salmonella arizonae (strain ATCC BAA-731 / CDC346-86 / RSK2980).